Reading from the N-terminus, the 397-residue chain is MKKKTVDDVSFAGKRVLMRVDFNVPLKDGAVTDDIRIRGALPSIQKVLSDGGCVILMSHLGRPKGKPVAEMSLKPAADRLAELLGKPVQMAPDCIGDEVKNMAAAMKAGDVLMLENLRFHKEEEANDPEFAKSLASLGEVFVNDAFGTAHRAHASTEGVTNYVAESVAGYLIGKELTYLGEATANPVRPFVAILGGAKISGKIDVLENLLGKVDTVLVGGAMVFTFFKAQGYNIGKSLVEDDKLELAKSILEKAKTSGVKFLLPTDVVLADKFDQDANTKIATIDSIEDDWMGLDIGPETANCFREEVVNAKTVIWNGPMGVFEMEKFAKGTMAVAQALADATKQGAITVIGGGDSAAAIAVAGLEDSVTHVSTGGGASLEFLEGKELPGIAALSNA.

Residues 21–23, Arg-36, 59–62, Arg-118, and Arg-151 contribute to the substrate site; these read DFN and HLGR. Residues Lys-202, Gly-293, Glu-324, and 353–356 contribute to the ATP site; that span reads GGDS.

This sequence belongs to the phosphoglycerate kinase family. Monomer.

The protein localises to the cytoplasm. It carries out the reaction (2R)-3-phosphoglycerate + ATP = (2R)-3-phospho-glyceroyl phosphate + ADP. It functions in the pathway carbohydrate degradation; glycolysis; pyruvate from D-glyceraldehyde 3-phosphate: step 2/5. The chain is Phosphoglycerate kinase from Chloroherpeton thalassium (strain ATCC 35110 / GB-78).